Reading from the N-terminus, the 391-residue chain is MVTVDEVRKAQRAEGPATILAIGTATPPNCVDQSTYPDYYFRITKSEHRTELKEKFQRMCDKSRIKKRYMYLTEEILKENPSMCEYMAPSLDARQDMVVVEIPKLGKEAATKAIKEWGQLKSKITHLVFCTTSGVDMPGADYQLTKLLGLRPSVKRLMMYQQGCFAGGTVLRLAKDLAENNKGARVLAVCSEITAVTFRGPSDTHLDSLVGQALFGDGAAAIIVGSDPLPDIERPLFELVSAAQTILPDSDGAIDGHLREVGLTFHLLKDVPGLISKNIEKSLNEAFKPLDITDWNSLFWIAHPGGPAILDQVEAKLGLKPEKLEATRNILSEYGNMSSACVLFILDEVRRKSVANGHKTTGEGLEWGVLFGFGPGLTVETVVLHSVAAST.

Residue Cys164 is part of the active site.

The protein belongs to the thiolase-like superfamily. Chalcone/stilbene synthases family. Homodimer.

It carries out the reaction (E)-4-coumaroyl-CoA + 3 malonyl-CoA + 3 H(+) = 2',4,4',6'-tetrahydroxychalcone + 3 CO2 + 4 CoA. It participates in secondary metabolite biosynthesis; flavonoid biosynthesis. Polyketide synthase producing p-coumaryltriacetic acid lactone (CTAL) and slightly naringenin chalcone. Can use p-coumaryl-CoA as substrate. This Rubus idaeus (Raspberry) protein is Polyketide synthase 3 (PKS3).